The sequence spans 84 residues: Beta-defensin 119 (84 aa).

A signal peptide spans 1 to 21; it reads MKLLYLFLAILLVIEEPVISG. 3 cysteine pairs are disulfide-bonded: cysteine 28–cysteine 55, cysteine 35–cysteine 49, and cysteine 39–cysteine 56.

The protein belongs to the beta-defensin family.

It is found in the secreted. Functionally, has antibacterial activity. This is Beta-defensin 119 (DEFB119) from Pongo pygmaeus (Bornean orangutan).